The chain runs to 330 residues: DNA-directed RNA polymerase subunit alpha (330 aa).

The interval 1-237 (MYTEINEMLT…RQLHAFVDMK (237 aa)) is alpha N-terminal domain (alpha-NTD). The segment at 251 to 330 (FDPVLLRSVD…ENWPPASLGE (80 aa)) is alpha C-terminal domain (alpha-CTD).

Belongs to the RNA polymerase alpha chain family. Homodimer. The RNAP catalytic core consists of 2 alpha, 1 beta, 1 beta' and 1 omega subunit. When a sigma factor is associated with the core the holoenzyme is formed, which can initiate transcription.

It catalyses the reaction RNA(n) + a ribonucleoside 5'-triphosphate = RNA(n+1) + diphosphate. In terms of biological role, DNA-dependent RNA polymerase catalyzes the transcription of DNA into RNA using the four ribonucleoside triphosphates as substrates. In Legionella pneumophila subsp. pneumophila (strain Philadelphia 1 / ATCC 33152 / DSM 7513), this protein is DNA-directed RNA polymerase subunit alpha.